The chain runs to 201 residues: Dermatopontin (201 aa).

Residues 1–18 (MDLSLLWVLLPLVTMAWG) form the signal peptide. Gln-19 bears the Pyrrolidone carboxylic acid mark. The residue at position 23 (Tyr-23) is a Sulfotyrosine. Repeat copies occupy residues 26–79 (PYQQ…ACMP), 70–75 (DRQWNY), 80–135 (TPQS…CCRY), and 125–130 (DREWQF). The interval 26-186 (PYQQYHDYSD…AVERDRQWKF (161 aa)) is 2 X 53-55 AA tandem repeats. Cystine bridges form between Cys-50/Cys-77, Cys-90/Cys-132, Cys-106/Cys-133, Cys-139/Cys-196, and Cys-143/Cys-189. Residues 70-186 (DRQWNYACMP…AVERDRQWKF (117 aa)) are 3 X 6 AA repeats of D-R-[EQ]-W-[NQK]-[FY]. 4 positions are modified to sulfotyrosine: Tyr-162, Tyr-164, Tyr-166, and Tyr-167. Residues 181 to 186 (DRQWKF) form a 3-3 repeat. Tyr-194 carries the post-translational modification Sulfotyrosine.

Belongs to the dermatopontin family. In terms of assembly, interacts with TGFB1, DCN and collagen. Post-translationally, sulfated on tyrosine residue(s). Expressed in fibroblasts, heart, skeletal muscle, brain and pancreas. Expressed at an intermediate level in lung and kidney, and at a low level in liver and placenta. Expressed at a lower level in fibroblasts from hypertrophic scar lesional skin and in fibroblasts from patients with systemic sclerosis than in normal skin fibroblasts.

Its subcellular location is the secreted. The protein localises to the extracellular space. It is found in the extracellular matrix. Functionally, seems to mediate adhesion by cell surface integrin binding. May serve as a communication link between the dermal fibroblast cell surface and its extracellular matrix environment. Enhances TGFB1 activity. Inhibits cell proliferation. Accelerates collagen fibril formation, and stabilizes collagen fibrils against low-temperature dissociation. This chain is Dermatopontin (DPT), found in Homo sapiens (Human).